A 213-amino-acid polypeptide reads, in one-letter code: Vacuolar protein sorting-associated protein 32 homolog 1 (213 aa).

Coiled-coil stretches lie at residues 11–42 (KQETSTLQTLDKLNETLEMLEKKENVLLKKAT) and 118–176 (TNID…QLLQ). Residues 180–213 (IHVPQGNKPARAPAQKQPTAEEDELAALQAEMAL) are disordered.

The protein belongs to the SNF7 family. Component of the endosomal sorting required for transport complex III (ESCRT-III), composed at least of VPS2, VPS20, VPS24 and VPS32. Interacts with SKD1. Interacts with BRO1/ALIX.

It localises to the endosome. In terms of biological role, component of the ESCRT-III complex, which is required for multivesicular bodies (MVBs) formation and sorting of endosomal cargo proteins into MVBs. The ESCRT-III complex is probably involved in the concentration of MVB cargo. The polypeptide is Vacuolar protein sorting-associated protein 32 homolog 1 (VPS32.1) (Arabidopsis thaliana (Mouse-ear cress)).